Here is a 429-residue protein sequence, read N- to C-terminus: E3 ubiquitin-protein ligase ZNRF4 (429 aa).

A signal peptide spans 1–27 (MLRCRPEPLMPRATRVAVAVSLPLSHA). At 28-250 (VIPTQLPSHP…PPCRDLDCHP (223 aa)) the chain is on the lumenal side. The interval 30–64 (PTQLPSHPGHRPSGRPRRCPKAPCLPSPVGLSSTQ) is disordered. A compositionally biased stretch (basic residues) spans 37-49 (PGHRPSGRPRRCP). An N-linked (GlcNAc...) asparagine glycan is attached at Asn-152. The PA domain maps to 152–223 (NRSLGAIALI…VGEAASQDLR (72 aa)). The helical transmembrane segment at 251–271 (VLTVSWALGRTLALVVSTLFV) threads the bilayer. At 272 to 429 (LNRLWLWAQA…SPAPPEAPGQ (158 aa)) the chain is on the cytoplasmic side. The segment at 309 to 352 (CAICLDEYEEGDQLKILPCSHTYHCKCIDPWFSQAPRRSCPVCK) adopts an RING-type; atypical zinc-finger fold. Disordered stretches follow at residues 358 to 381 (TEDS…GHRP) and 409 to 429 (TTSL…APGQ). The segment covering 409–420 (TTSLEAEDTTVS) has biased composition (polar residues).

Interacts with CANX.

The protein resides in the endoplasmic reticulum membrane. It carries out the reaction S-ubiquitinyl-[E2 ubiquitin-conjugating enzyme]-L-cysteine + [acceptor protein]-L-lysine = [E2 ubiquitin-conjugating enzyme]-L-cysteine + N(6)-ubiquitinyl-[acceptor protein]-L-lysine.. It participates in protein modification; protein ubiquitination. E3 ubiquitin-protein ligase that acts as a negative regulator of NOD2 signaling by mediating ubiquitination and degradation of RIPK2. Also catalyzes ubiquitination and proteasomal degradation of CANX within the endoplasmic reticulum. Could have a role in spermatogenesis. This chain is E3 ubiquitin-protein ligase ZNRF4 (ZNRF4), found in Macaca fascicularis (Crab-eating macaque).